The following is a 682-amino-acid chain: Protein ACTIVITY OF BC1 COMPLEX KINASE 1, chloroplastic (682 aa).

The N-terminal 79 residues, 1 to 79 (MESIHCNSLL…NSTDASVMTT (79 aa)), are a transit peptide targeting the chloroplast. In terms of domain architecture, Protein kinase spans 236-567 (KISSQTIAAA…IQVLFKDGVF (332 aa)). Residues 242–250 (IAAASLGQV) and Lys265 contribute to the ATP site. The Proton acceptor role is filled by Asp400.

This sequence belongs to the protein kinase superfamily. ADCK protein kinase family. In terms of assembly, interacts with ABC1K3 in plastoglobules (PG). Expressed in all tissues (e.g. especially in leaves) at all developmental stages from seed germination to flowering, except in the root tips.

It localises to the plastid. The protein resides in the chloroplast. The protein localises to the plastoglobule. It catalyses the reaction L-seryl-[protein] + ATP = O-phospho-L-seryl-[protein] + ADP + H(+). The catalysed reaction is L-threonyl-[protein] + ATP = O-phospho-L-threonyl-[protein] + ADP + H(+). Its function is as follows. Kinase that can phosphorylate the tocopherol cyclase VTE1, a key enzyme of tocopherol (vitamin E) metabolism and involved in the recycling of oxidated alpha-tocopherol quinone, possibly stabilizing it at plastoglobules. Also regulates plastoglobule protein composition. Prevents photodamage of chloroplasts under continuous red light, thus working in opposition to ABC1K3. Together with ABC1K1, contributes to plastoglobule (PG) function in prenyl-lipid metabolism, stress response, and thylakoid remodeling. Involved in chlorophyll degradation and in the maintenance of the number of chlorophyll-binding photosynthetic thylakoid membranes. Ensures photosynthetic electron transport by regulating the homeostasis of plastoquinone, beta-carotene and xanthophyll lutein, as well as membrane antioxidant tocopherol metabolism. Seems to affect specifically stability or turnover of D1 protein, product of psbA, one of the four core subunits of the photosystem II (PSII). Required for photooxidative stress responses, including the induction of oxidative stress response genes (e.g. FSD1, CSD1, CAT1, and UTG71C1), to prevent photosystem II core and chlorophyll degradations. This Arabidopsis thaliana (Mouse-ear cress) protein is Protein ACTIVITY OF BC1 COMPLEX KINASE 1, chloroplastic.